We begin with the raw amino-acid sequence, 202 residues long: Na(+)-translocating NADH-quinone reductase subunit E (202 aa).

The next 6 helical transmembrane spans lie at 4–24 (LAGL…FFLG), 35–55 (IEVA…TVPI), 81–101 (FLGL…LEMF), 114–134 (GIYL…LFMV), 144–164 (LVYG…LAGV), and 180–200 (LGIT…FSGI).

This sequence belongs to the NqrDE/RnfAE family. Composed of six subunits; NqrA, NqrB, NqrC, NqrD, NqrE and NqrF.

It is found in the cell inner membrane. The enzyme catalyses a ubiquinone + n Na(+)(in) + NADH + H(+) = a ubiquinol + n Na(+)(out) + NAD(+). NQR complex catalyzes the reduction of ubiquinone-1 to ubiquinol by two successive reactions, coupled with the transport of Na(+) ions from the cytoplasm to the periplasm. NqrA to NqrE are probably involved in the second step, the conversion of ubisemiquinone to ubiquinol. This is Na(+)-translocating NADH-quinone reductase subunit E from Nitrosomonas europaea (strain ATCC 19718 / CIP 103999 / KCTC 2705 / NBRC 14298).